Here is a 511-residue protein sequence, read N- to C-terminus: Histidine ammonia-lyase (511 aa).

Residues 142-144 constitute a cross-link (5-imidazolinone (Ala-Gly)); sequence ASG. S143 carries the post-translational modification 2,3-didehydroalanine (Ser).

Belongs to the PAL/histidase family. Post-translationally, contains an active site 4-methylidene-imidazol-5-one (MIO), which is formed autocatalytically by cyclization and dehydration of residues Ala-Ser-Gly.

It is found in the cytoplasm. The catalysed reaction is L-histidine = trans-urocanate + NH4(+). Its pathway is amino-acid degradation; L-histidine degradation into L-glutamate; N-formimidoyl-L-glutamate from L-histidine: step 1/3. The protein is Histidine ammonia-lyase of Brucella anthropi (strain ATCC 49188 / DSM 6882 / CCUG 24695 / JCM 21032 / LMG 3331 / NBRC 15819 / NCTC 12168 / Alc 37) (Ochrobactrum anthropi).